Reading from the N-terminus, the 269-residue chain is Sororin (269 aa).

3 disordered regions span residues 1–39 (MSEGKKRSRGGLAIISPPKRRSQRKSTSDSPIPEPIMKR), 56–110 (VNTG…PKIN), and 146–169 (SLNSSSSLYSPTRKTDSSDTSTPN). The segment covering 57-66 (NTGSQSTPKV) has biased composition (polar residues). Residues 85 to 87 (KEN) carry the KEN box motif. Residues 146-155 (SLNSSSSLYS) are compositionally biased toward low complexity. Residues 180–182 (FGF) carry the FGF motif motif. The C-terminal Sororin domain stretch occupies residues 247-269 (LDEWAAFMNAEFEEAEKFDLTVE).

Belongs to the sororin family. As to quaternary structure, interacts with the APC/C complex. Interacts with the chromatin-bound cohesin complex; the interaction is indirect, occurs after DNA replication and requires acetylation of the cohesin component smc3. Interacts (via the FGF motif) with pds5a and pds5b; the interaction is direct and prevents the interaction of pds5a with wapl. Post-translationally, ubiquitinated by the APC/C complex in G1, leading to its degradation.

The protein resides in the nucleus. Its subcellular location is the chromosome. It is found in the cytoplasm. Regulator of sister chromatid cohesion in mitosis stabilizing cohesin complex association with chromatin. May antagonize the action of wapl which stimulates cohesin dissociation from chromatin. Cohesion ensures that chromosome partitioning is accurate in both meiotic and mitotic cells and plays an important role in DNA repair. Required for efficient DNA double-stranded break repair. The sequence is that of Sororin (cdca5-a) from Xenopus laevis (African clawed frog).